We begin with the raw amino-acid sequence, 192 residues long: MGVPDCLALPLLVTFLLLSLGLPVLGAPPRLICDSRVLERYILEAKEAENITMGCAEGPRFNENFTVPDTKVNFYAWKTMGVEEQAVEVWQGLSLLFEAILRAQAVLANSSQPSEMLQLHVDKAISGLRSLTSLLRALGAQKEAISPPDTTQVIPLRRFTVDTFCKLFRIYSNFLRGKLKLYTGEACRRGDR.

An N-terminal signal peptide occupies residues M1 to G26. C33 and C187 are oxidised to a cystine. N-linked (GlcNAc...) asparagine glycans are attached at residues N50, N64, and N109.

The protein belongs to the EPO/TPO family.

The protein resides in the secreted. Functionally, hormone involved in the regulation of erythrocyte proliferation and differentiation and the maintenance of a physiological level of circulating erythrocyte mass. Binds to EPOR leading to EPOR dimerization and JAK2 activation thereby activating specific downstream effectors, including STAT1 and STAT3. The sequence is that of Erythropoietin (EPO) from Nannospalax galili (Northern Israeli blind subterranean mole rat).